The following is an 83-amino-acid chain: Short neurotoxin 3FTx-Oxy4 (83 aa).

Residues 1–21 (MKTLLLTLVVVTIVCLDLGYT) form the signal peptide. Disulfide bonds link C24–C45, C38–C62, C64–C75, and C76–C81.

It belongs to the three-finger toxin family. Short-chain subfamily. Type I alpha-neurotoxin sub-subfamily. Expressed by the venom gland.

Its subcellular location is the secreted. Binds to muscle nicotinic acetylcholine receptor (nAChR) and inhibit acetylcholine from binding to the receptor, thereby impairing neuromuscular transmission. This is Short neurotoxin 3FTx-Oxy4 from Oxyuranus microlepidotus (Inland taipan).